The following is a 254-amino-acid chain: Glucosamine-6-phosphate deaminase (254 aa).

D67 (proton acceptor; for enolization step) is an active-site residue. The active-site For ring-opening step is N136. The active-site Proton acceptor; for ring-opening step is the H138. The active-site For ring-opening step is E143.

It belongs to the glucosamine/galactosamine-6-phosphate isomerase family. NagB subfamily.

The enzyme catalyses alpha-D-glucosamine 6-phosphate + H2O = beta-D-fructose 6-phosphate + NH4(+). Its pathway is amino-sugar metabolism; N-acetylneuraminate degradation; D-fructose 6-phosphate from N-acetylneuraminate: step 5/5. Catalyzes the reversible isomerization-deamination of glucosamine 6-phosphate (GlcN6P) to form fructose 6-phosphate (Fru6P) and ammonium ion. The polypeptide is Glucosamine-6-phosphate deaminase (Brevibacillus brevis (strain 47 / JCM 6285 / NBRC 100599)).